The following is a 38-amino-acid chain: Potassium channel toxin alpha-KTx 2.21 (38 aa).

3 cysteine pairs are disulfide-bonded: Cys-7–Cys-29, Cys-13–Cys-34, and Cys-17–Cys-36.

As to expression, expressed by the venom gland.

It localises to the secreted. Inhibits human voltage-gated potassium (Kv) channels Kv1.2/KCNA2 and Kv1.3/KCNA3. Does not block human Kv1.1/KCNA1 at 100nM concentration. The sequence is that of Potassium channel toxin alpha-KTx 2.21 from Centruroides bonito (Scorpion).